The chain runs to 380 residues: DNA replication and repair protein RecF (380 aa).

30 to 37 (GENAQGKT) provides a ligand contact to ATP.

Belongs to the RecF family.

It is found in the cytoplasm. In terms of biological role, the RecF protein is involved in DNA metabolism; it is required for DNA replication and normal SOS inducibility. RecF binds preferentially to single-stranded, linear DNA. It also seems to bind ATP. The polypeptide is DNA replication and repair protein RecF (Synechococcus sp. (strain JA-3-3Ab) (Cyanobacteria bacterium Yellowstone A-Prime)).